Here is a 449-residue protein sequence, read N- to C-terminus: Asparagine--tRNA ligase (449 aa).

It belongs to the class-II aminoacyl-tRNA synthetase family. As to quaternary structure, homodimer.

It is found in the cytoplasm. It catalyses the reaction tRNA(Asn) + L-asparagine + ATP = L-asparaginyl-tRNA(Asn) + AMP + diphosphate + H(+). This Mesomycoplasma hyopneumoniae (strain J / ATCC 25934 / NCTC 10110) (Mycoplasma hyopneumoniae) protein is Asparagine--tRNA ligase.